We begin with the raw amino-acid sequence, 337 residues long: B1 bradykinin receptor (337 aa).

The Extracellular segment spans residues 1 to 41 (MASEVLLELQPSNRSLQAPANITSCESALEDWDLLYRVLPG). N-linked (GlcNAc...) asparagine glycans are attached at residues Asn13 and Asn21. A helical transmembrane segment spans residues 42 to 62 (FVITICFFGLLGNLLVLSFFL). At 63–83 (LPWRQWWWQQRQRQQRLTIAE) the chain is on the cytoplasmic side. The chain crosses the membrane as a helical span at residues 84 to 104 (IYLANLAASDLVFVLGLPFWA). Over 105–121 (ENIGNRFNWPFGTDLCR) the chain is Extracellular. A disulfide bridge links Cys120 with Cys199. Residues 122-142 (VVSGVIKANLFVSIFLVVAIS) traverse the membrane as a helical segment. Topologically, residues 143-164 (QDRYRLLVYPMTSWGYRRRRQA) are cytoplasmic. A helical transmembrane segment spans residues 165 to 185 (QATCLLIWVAGGLLSIPTFLL). Residues 186 to 217 (RSVKVVPDLNVSACILLFPHEAWHFARMVELN) are Extracellular-facing. N-linked (GlcNAc...) asparagine glycosylation is present at Asn195. A helical transmembrane segment spans residues 218-238 (VLGFLLPVTAIIFFNYHILAS). The Cytoplasmic segment spans residues 239–261 (LRGQKEASRTRCGGPKGSKTTGL). The helical transmembrane segment at 262–282 (ILTLVASFLVCWCPYHFFAFL) threads the bilayer. Over 283 to 305 (DFLVQVRVIQDCSWKEITDLGLQ) the chain is Extracellular. The helical transmembrane segment at 306-326 (LANFFAFVNSCLNPLIYVFAG) threads the bilayer. Over 327–337 (RLLKTRVLGTL) the chain is Cytoplasmic.

This sequence belongs to the G-protein coupled receptor 1 family. Bradykinin receptor subfamily. BDKRB1 sub-subfamily. In terms of tissue distribution, expressed in bladder, lung, duodenum, kidney, uterus, thymus, salivary gland, testis, prostate, macrophages, aorta, spleen and heart.

Its subcellular location is the cell membrane. Functionally, this is a receptor for bradykinin. Could be a factor in chronic pain and inflammation. The polypeptide is B1 bradykinin receptor (Bdkrb1) (Rattus norvegicus (Rat)).